The sequence spans 158 residues: Protein Smg homolog (158 aa).

It belongs to the Smg family.

This Coxiella burnetii (strain RSA 331 / Henzerling II) protein is Protein Smg homolog.